We begin with the raw amino-acid sequence, 129 residues long: Small ribosomal subunit protein uS9 (129 aa).

The protein belongs to the universal ribosomal protein uS9 family.

This Helicobacter pylori (strain Shi470) protein is Small ribosomal subunit protein uS9.